Here is a 50-residue protein sequence, read N- to C-terminus: Large ribosomal subunit protein bL33 (50 aa).

The protein belongs to the bacterial ribosomal protein bL33 family.

The polypeptide is Large ribosomal subunit protein bL33 (Solibacter usitatus (strain Ellin6076)).